The sequence spans 336 residues: Glycerol-3-phosphate dehydrogenase [NAD(P)+] (336 aa).

3 residues coordinate NADPH: S11, W12, and K106. K106, G134, and S136 together coordinate sn-glycerol 3-phosphate. A138 provides a ligand contact to NADPH. Residues K189, D242, S252, R253, and N254 each contribute to the sn-glycerol 3-phosphate site. The active-site Proton acceptor is K189. R253 contacts NADPH. 2 residues coordinate NADPH: V277 and E279.

The protein belongs to the NAD-dependent glycerol-3-phosphate dehydrogenase family.

The protein localises to the cytoplasm. The enzyme catalyses sn-glycerol 3-phosphate + NAD(+) = dihydroxyacetone phosphate + NADH + H(+). It carries out the reaction sn-glycerol 3-phosphate + NADP(+) = dihydroxyacetone phosphate + NADPH + H(+). Its pathway is membrane lipid metabolism; glycerophospholipid metabolism. Its function is as follows. Catalyzes the reduction of the glycolytic intermediate dihydroxyacetone phosphate (DHAP) to sn-glycerol 3-phosphate (G3P), the key precursor for phospholipid synthesis. This is Glycerol-3-phosphate dehydrogenase [NAD(P)+] from Agathobacter rectalis (strain ATCC 33656 / DSM 3377 / JCM 17463 / KCTC 5835 / VPI 0990) (Eubacterium rectale).